The primary structure comprises 1450 residues: Actin cytoskeleton-regulatory complex protein PAN1 (1450 aa).

Residues 1–140 (MYSNPNNFFG…PPPPVKPQAT (140 aa)) form a disordered region. Composition is skewed to low complexity over residues 15–37 (GPGA…QQPD) and 59–71 (PGLQ…LQPQ). Polar residues predominate over residues 72–83 (FTGYGQTPQQGM). Over residues 93–119 (IPQQYQQQFQQQQTQQQQPQQQQMPFA) the composition is skewed to low complexity. Positions 120-136 (AAPPQPTQTLAPPPPVK) are enriched in pro residues. 2 consecutive EH domains span residues 181–270 (DQAK…VSSM) and 444–533 (EKTR…STRN). EF-hand domains lie at 214–249 (LDGD…CNLK) and 477–512 (LEKP…IYRK). 3 disordered regions span residues 600 to 625 (RSSA…SNEE), 788 to 851 (SDQD…WEDA), and 865 to 1450 (LQRS…RVLD). Residues 622–741 (SNEELSLDQL…ELFRLKDAKA (120 aa)) are a coiled coil. Basic and acidic residues predominate over residues 788 to 850 (SDQDAEKRLE…TEHEKRRWED (63 aa)). Residues 902-924 (SPASISRTASPAAPPAAGGSYSS) show a composition bias toward low complexity. Positions 960–1148 (ETAAQRAERE…LEAMDDDSSS (189 aa)) form a coiled coil. Basic and acidic residues-rich tracts occupy residues 965 to 997 (RAER…RLAE), 1026 to 1101 (AKPD…EEEK), and 1110 to 1140 (EAKE…RQLE). The segment covering 1141-1153 (AMDDDSSSDDEGP) has biased composition (acidic residues). The segment covering 1156-1169 (ITPQASTPTMNDSH) has biased composition (polar residues). Composition is skewed to pro residues over residues 1178–1188 (QPTPPPAPVVS) and 1222–1239 (APAP…PPQP). Residues 1265 to 1275 (RRPDDDGWGSD) are compositionally biased toward basic and acidic residues. Residues 1276–1285 (KDEEDEESDD) show a composition bias toward acidic residues. The segment covering 1314–1323 (GDKSATSPTV) has biased composition (polar residues). 3 stretches are compositionally biased toward pro residues: residues 1327 to 1352 (VAPP…PMPG), 1361 to 1375 (PGAP…PPMP), and 1381 to 1411 (PGAP…PPAA). One can recognise a WH2 domain in the interval 1417–1434 (RPAGLLGQIQAGKALKKT).

This sequence belongs to the PAN1 family. Component of the PAN1 actin cytoskeleton-regulatory complex.

It is found in the cell membrane. The protein resides in the endosome membrane. Its subcellular location is the cytoplasm. It localises to the cytoskeleton. The protein localises to the actin patch. Component of the PAN1 actin cytoskeleton-regulatory complex required for the internalization of endosomes during actin-coupled endocytosis. The complex links the site of endocytosis to the cell membrane-associated actin cytoskeleton. Mediates uptake of external molecules and vacuolar degradation of plasma membrane proteins. Plays a role in the proper organization of the cell membrane-associated actin cytoskeleton and promotes its destabilization. In Chaetomium globosum (strain ATCC 6205 / CBS 148.51 / DSM 1962 / NBRC 6347 / NRRL 1970) (Soil fungus), this protein is Actin cytoskeleton-regulatory complex protein PAN1 (PAN1).